A 462-amino-acid chain; its full sequence is G-patch domain and KOW motifs-containing protein homolog 1 (462 aa).

2 disordered regions span residues 1–26 (MVEQ…KREE) and 182–218 (LKLP…EEEK). A G-patch domain is found at 154 to 202 (IESFGLAILRGCNWKDGDGIGKNPQKVALKLPNRRPPGLGLGATPKNPV). A KOW 1 domain is found at 221–248 (EIKVGSFIKVVDGRNKGVYGKVEGRDDD). Positions 289-305 (EYDKEKDRLETERKKLE) are enriched in basic and acidic residues. A disordered region spans residues 289-337 (EYDKEKDRLETERKKLESQPPSTSTSQSSKDYKSKSSSSKHDKNSSEYE). Over residues 306-317 (SQPPSTSTSQSS) the composition is skewed to low complexity. Positions 318-337 (KDYKSKSSSSKHDKNSSEYE) are enriched in basic and acidic residues. Residues 401–428 (PREIGEKLMIVAGKRSGQLAVMLDKDKR) enclose the KOW 2 domain.

The protein belongs to the MOS2 family.

The protein resides in the nucleus. In Caenorhabditis elegans, this protein is G-patch domain and KOW motifs-containing protein homolog 1.